The chain runs to 592 residues: Guanylate-binding protein 1 (592 aa).

The interval 1–311 is GTPase domain (Globular); sequence MASEIHMTGP…NAISSGDLPC (311 aa). The GB1/RHD3-type G domain maps to 35–278; that stretch reads TQPMVVVAIV…FCSYIFSNSK (244 aa). GTP is bound by residues 45 to 52, 67 to 69, and 97 to 101; these read GLYRTGKS, LGS, and DTEGL. A Phosphoserine modification is found at Ser156. Cys589 carries the post-translational modification Cysteine methyl ester. Residue Cys589 is the site of S-farnesyl cysteine attachment. Thr590 is modified (phosphothreonine). Positions 590–592 are cleaved as a propeptide — removed in mature form; that stretch reads TIS.

The protein belongs to the TRAFAC class dynamin-like GTPase superfamily. GB1/RHD3 GTPase family. GB1 subfamily. As to quaternary structure, homodimer; homodimerization occurs upon GTP-binding and is required for the second hydrolysis step from GDP to GMP. Undergoes conformational changes and oligomerization upon GTP-binding and hydrolysis. Heterodimer with other family members, including GBP2, GBP3, GBP4 and GBP5. Dimerization regulates subcellular location to membranous structures. Interacts with SQSTM1. Interacts (when phosphorylated) with 14-3-3 protein sigma (SFN); leading to GBP1 retention in the cytosol and inactivation. In terms of processing, isoprenylation is required for proper subcellular location. Phosphorylated at Ser-156 by PIM1 in absence of infection, inhibits GBP1: phosphorylation promotes interaction with 14-3-3 protein sigma (SFN), leading to GBP1 retention in the cytosol. Dephosphorylated in response to infection, liberating GBP1.

It localises to the cytoplasmic vesicle membrane. The protein localises to the golgi apparatus membrane. The protein resides in the cell membrane. Its subcellular location is the cytoplasm. It is found in the cytosol. It localises to the secreted. It carries out the reaction GTP + H2O = GDP + phosphate + H(+). It catalyses the reaction GDP + H2O = GMP + phosphate + H(+). Its function is as follows. Interferon (IFN)-inducible GTPase that plays important roles in innate immunity against a diverse range of bacterial, viral and protozoan pathogens. Hydrolyzes GTP to GMP in two consecutive cleavage reactions: GTP is first hydrolyzed to GDP and then to GMP in a processive manner. Following infection, recruited to the pathogen-containing vacuoles or vacuole-escaped bacteria and promotes both inflammasome assembly and autophagy. Acts as a positive regulator of inflammasome assembly by facilitating the detection of inflammasome ligands from pathogens. Involved in the lysis of pathogen-containing vacuoles, releasing pathogens into the cytosol. Following pathogen release in the cytosol, forms a protein coat in a GTPase-dependent manner that encapsulates pathogens and promotes the detection of ligands by pattern recognition receptors. Plays a key role in inflammasome assembly in response to infection by Gram-negative bacteria: following pathogen release in the cytosol, forms a protein coat that encapsulates Gram-negative bacteria and directly binds to lipopolysaccharide (LPS), disrupting the O-antigen barrier and unmasking lipid A that is that detected by the non-canonical inflammasome effector CASP4/CASP11. Also promotes recruitment of proteins that mediate bacterial cytolysis, leading to release double-stranded DNA (dsDNA) that activates the AIM2 inflammasome. Involved in autophagy by regulating bacteriolytic peptide generation via its interaction with ubiquitin-binding protein SQSTM1, which delivers monoubiquitinated proteins to autolysosomes for the generation of bacteriolytic peptides. Confers protection to several pathogens, including the bacterial pathogens L.monocytogenes and M.bovis BCG as well as the protozoan pathogen T.gondii. Exhibits antiviral activity against influenza virus. The polypeptide is Guanylate-binding protein 1 (GBP1) (Pongo abelii (Sumatran orangutan)).